The sequence spans 91 residues: ATP synthase subunit c (91 aa).

2 helical membrane passes run F4 to I24 and I53 to L73.

This sequence belongs to the ATPase C chain family. In terms of assembly, F-type ATPases have 2 components, F(1) - the catalytic core - and F(0) - the membrane proton channel. F(1) has five subunits: alpha(3), beta(3), gamma(1), delta(1), epsilon(1). F(0) has three main subunits: a(1), b(2) and c(10-14). The alpha and beta chains form an alternating ring which encloses part of the gamma chain. F(1) is attached to F(0) by a central stalk formed by the gamma and epsilon chains, while a peripheral stalk is formed by the delta and b chains.

The protein resides in the cell inner membrane. F(1)F(0) ATP synthase produces ATP from ADP in the presence of a proton or sodium gradient. F-type ATPases consist of two structural domains, F(1) containing the extramembraneous catalytic core and F(0) containing the membrane proton channel, linked together by a central stalk and a peripheral stalk. During catalysis, ATP synthesis in the catalytic domain of F(1) is coupled via a rotary mechanism of the central stalk subunits to proton translocation. In terms of biological role, key component of the F(0) channel; it plays a direct role in translocation across the membrane. A homomeric c-ring of between 10-14 subunits forms the central stalk rotor element with the F(1) delta and epsilon subunits. The protein is ATP synthase subunit c of Geotalea uraniireducens (strain Rf4) (Geobacter uraniireducens).